We begin with the raw amino-acid sequence, 271 residues long: Pyrroline-5-carboxylate reductase (271 aa).

This sequence belongs to the pyrroline-5-carboxylate reductase family.

The protein localises to the cytoplasm. It catalyses the reaction L-proline + NADP(+) = (S)-1-pyrroline-5-carboxylate + NADPH + 2 H(+). The enzyme catalyses L-proline + NAD(+) = (S)-1-pyrroline-5-carboxylate + NADH + 2 H(+). It participates in amino-acid biosynthesis; L-proline biosynthesis; L-proline from L-glutamate 5-semialdehyde: step 1/1. Catalyzes the reduction of 1-pyrroline-5-carboxylate (PCA) to L-proline. The sequence is that of Pyrroline-5-carboxylate reductase from Staphylococcus aureus (strain COL).